The primary structure comprises 115 residues: UPF0235 protein CTA_0423 (115 aa).

This sequence belongs to the UPF0235 family.

The protein is UPF0235 protein CTA_0423 of Chlamydia trachomatis serovar A (strain ATCC VR-571B / DSM 19440 / HAR-13).